Here is an 864-residue protein sequence, read N- to C-terminus: Leucine--tRNA ligase (864 aa).

Residues 42-52 (PYPSGKLHMGH) carry the 'HIGH' region motif. Positions 624-628 (KMSKS) match the 'KMSKS' region motif. An ATP-binding site is contributed by K627.

Belongs to the class-I aminoacyl-tRNA synthetase family.

It localises to the cytoplasm. The enzyme catalyses tRNA(Leu) + L-leucine + ATP = L-leucyl-tRNA(Leu) + AMP + diphosphate. The protein is Leucine--tRNA ligase of Burkholderia mallei (strain ATCC 23344).